The following is a 565-amino-acid chain: Oxygen-dependent choline dehydrogenase (565 aa).

7–36 (DYIICGAGSAGNVLATRLTEDPGVTVLLLE) lines the FAD pocket. His474 acts as the Proton acceptor in catalysis.

This sequence belongs to the GMC oxidoreductase family. FAD is required as a cofactor.

It carries out the reaction choline + A = betaine aldehyde + AH2. It catalyses the reaction betaine aldehyde + NAD(+) + H2O = glycine betaine + NADH + 2 H(+). It functions in the pathway amine and polyamine biosynthesis; betaine biosynthesis via choline pathway; betaine aldehyde from choline (cytochrome c reductase route): step 1/1. Functionally, involved in the biosynthesis of the osmoprotectant glycine betaine. Catalyzes the oxidation of choline to betaine aldehyde and betaine aldehyde to glycine betaine at the same rate. This chain is Oxygen-dependent choline dehydrogenase, found in Burkholderia pseudomallei (strain K96243).